The sequence spans 142 residues: Transcriptional regulator MraZ (142 aa).

SpoVT-AbrB domains are found at residues 5–47 and 76–119; these read EYPY…PLAS and ANKA…NPGR.

It belongs to the MraZ family. Forms oligomers.

The protein resides in the cytoplasm. It is found in the nucleoid. The sequence is that of Transcriptional regulator MraZ from Deinococcus deserti (strain DSM 17065 / CIP 109153 / LMG 22923 / VCD115).